Here is a 98-residue protein sequence, read N- to C-terminus: Defensin-like protein 192 (98 aa).

Positions 1–27 are cleaved as a signal peptide; the sequence is MATKSVSTFAIFFILVLAIFETPEIEA. 4 disulfides stabilise this stretch: C32–C86, C45–C69, C54–C81, and C58–C83.

It belongs to the DEFL family. Protease inhibitor I18 (RTI/MTI-2) subfamily.

It localises to the secreted. The sequence is that of Defensin-like protein 192 (ATTI7) from Arabidopsis thaliana (Mouse-ear cress).